A 270-amino-acid chain; its full sequence is tRNA pseudouridine synthase A (270 aa).

Catalysis depends on Asp-60, which acts as the Nucleophile. Residues 107–111 (FHARF) are RNA binding. Tyr-118 contacts substrate. An interaction with tRNA region spans residues 168–172 (QCQSR).

Belongs to the tRNA pseudouridine synthase TruA family. In terms of assembly, homodimer.

It carries out the reaction uridine(38/39/40) in tRNA = pseudouridine(38/39/40) in tRNA. In terms of biological role, formation of pseudouridine at positions 38, 39 and 40 in the anticodon stem and loop of transfer RNAs. The protein is tRNA pseudouridine synthase A of Escherichia coli O139:H28 (strain E24377A / ETEC).